The sequence spans 153 residues: Heavy metal-associated isoprenylated plant protein 26 (153 aa).

One can recognise an HMA domain in the interval 25-89 (LQTVEIKVKM…MSHRTGKKVE (65 aa)). A metal cation is bound by residues Cys36 and Cys39. The residue at position 150 (Cys150) is a Cysteine methyl ester. Residue Cys150 is the site of S-farnesyl cysteine attachment. Positions 151-153 (VVM) are cleaved as a propeptide — removed in mature form.

This sequence belongs to the HIPP family. In terms of assembly, interacts with ZHD11/HB29 and ACBP2 (via ankyrin repeats). May also interact with HB21. In terms of tissue distribution, expressed in roots, stems and flowers. Lower expression in siliques and leaves. Expressed in the vascular tissues. Detected in lateral roots, shoot apical meristem, petals of unopened flowers and weak expression in leaf vasculature.

Its subcellular location is the nucleus membrane. It is found in the cell membrane. Functionally, heavy-metal-binding protein. Binds lead, cadmium and copper. May be involved in heavy-metal transport. May be involved in cadmium transport and play a role in cadmium detoxification. The polypeptide is Heavy metal-associated isoprenylated plant protein 26 (Arabidopsis thaliana (Mouse-ear cress)).